A 414-amino-acid chain; its full sequence is tRNA dimethylallyltransferase (414 aa).

Residue A33 to T40 coordinates ATP. A substrate-binding site is contributed by T35–T40. 3 interaction with substrate tRNA regions span residues D58–L61, Q182–R186, and R266–R271.

The protein belongs to the IPP transferase family. In terms of assembly, monomer. Mg(2+) serves as cofactor.

The enzyme catalyses adenosine(37) in tRNA + dimethylallyl diphosphate = N(6)-dimethylallyladenosine(37) in tRNA + diphosphate. In terms of biological role, catalyzes the transfer of a dimethylallyl group onto the adenine at position 37 in tRNAs that read codons beginning with uridine, leading to the formation of N6-(dimethylallyl)adenosine (i(6)A). The sequence is that of tRNA dimethylallyltransferase from Psychrobacter arcticus (strain DSM 17307 / VKM B-2377 / 273-4).